The sequence spans 62 residues: 2-hydroxymuconate tautomerase (62 aa).

Pro-2 acts as the Proton acceptor; via imino nitrogen in catalysis. 9 to 12 serves as a coordination point for substrate; sequence LEGR.

It belongs to the 4-oxalocrotonate tautomerase family. In terms of assembly, homohexamer.

The catalysed reaction is (2Z,4E)-2-hydroxyhexa-2,4-dienedioate = (3E)-2-oxohex-3-enedioate. In terms of biological role, catalyzes both 1,3- and 1,5-keto-enol tautomerization of the diacid 2-hydroxymuconate (2-hydroxy-2,4-hexadienedioate) to produce 2-oxo-4-hexenedioate. This reaction is highly stereoselective and produces a mixture of stereoisomers, where the (3S)-isomer of 2-oxo-4-hexenedioate predominates. Also catalyzes the tautomerization of 2-hydroxymuconate to 2-oxo-3-hexenedioate, however this reaction is slower and occurs after the tautomerization of 2-hydroxymuconate to 2-oxo-4-hexenedioate. Using 2-hydroxy-2,4-pentadienoate, phenylenolpyruvate, (p-hydroxyphenyl)-enolpyruvate and 2-hydroxy-2,4-heptadiene-1,7-dioate, YwhB is a highly efficient 1,3-keto-enol tautomerase, but clearly not a 1,5-keto-enol tautomerase. Tautomerization of the two monoacids 2-hydroxy-2,4-pentadienoate and phenylenolpyruvate produces a mixture of stereoisomers, where the (3R)-isomers predominate. This chain is 2-hydroxymuconate tautomerase (ywhB), found in Bacillus subtilis (strain 168).